The following is a 288-amino-acid chain: Acetyl-coenzyme A carboxylase carboxyl transferase subunit beta (288 aa).

The region spanning 34 to 288 (LFAKCPACKH…HLVAFHGGGQ (255 aa)) is the CoA carboxyltransferase N-terminal domain. Cys38, Cys41, Cys56, and Cys59 together coordinate Zn(2+). Residues 38–59 (CPACKHMIYKKDLGLAKICPTC) form a C4-type zinc finger.

It belongs to the AccD/PCCB family. Acetyl-CoA carboxylase is a heterohexamer composed of biotin carboxyl carrier protein (AccB), biotin carboxylase (AccC) and two subunits each of ACCase subunit alpha (AccA) and ACCase subunit beta (AccD). The cofactor is Zn(2+).

It is found in the cytoplasm. It catalyses the reaction N(6)-carboxybiotinyl-L-lysyl-[protein] + acetyl-CoA = N(6)-biotinyl-L-lysyl-[protein] + malonyl-CoA. The protein operates within lipid metabolism; malonyl-CoA biosynthesis; malonyl-CoA from acetyl-CoA: step 1/1. Its function is as follows. Component of the acetyl coenzyme A carboxylase (ACC) complex. Biotin carboxylase (BC) catalyzes the carboxylation of biotin on its carrier protein (BCCP) and then the CO(2) group is transferred by the transcarboxylase to acetyl-CoA to form malonyl-CoA. This Streptococcus pyogenes serotype M3 (strain ATCC BAA-595 / MGAS315) protein is Acetyl-coenzyme A carboxylase carboxyl transferase subunit beta.